Reading from the N-terminus, the 318-residue chain is ADP-L-glycero-D-manno-heptose-6-epimerase (318 aa).

Residues 10–11, 31–32, Lys-38, Lys-53, 76–80, and Asn-93 each bind NADP(+); these read FI, DN, and QGACS. The active-site Proton acceptor is the Tyr-141. Residue Lys-145 participates in NADP(+) binding. A substrate-binding site is contributed by Asn-172. The NADP(+) site is built by Val-173 and Lys-181. Catalysis depends on Lys-181, which acts as the Proton acceptor. Residues Arg-183, His-190, 204 to 207, Arg-212, and Tyr-276 each bind substrate; that span reads FEGS.

This sequence belongs to the NAD(P)-dependent epimerase/dehydratase family. HldD subfamily. Homopentamer. NADP(+) serves as cofactor.

It catalyses the reaction ADP-D-glycero-beta-D-manno-heptose = ADP-L-glycero-beta-D-manno-heptose. It functions in the pathway nucleotide-sugar biosynthesis; ADP-L-glycero-beta-D-manno-heptose biosynthesis; ADP-L-glycero-beta-D-manno-heptose from D-glycero-beta-D-manno-heptose 7-phosphate: step 4/4. Catalyzes the interconversion between ADP-D-glycero-beta-D-manno-heptose and ADP-L-glycero-beta-D-manno-heptose via an epimerization at carbon 6 of the heptose. The polypeptide is ADP-L-glycero-D-manno-heptose-6-epimerase (Brachyspira hyodysenteriae (strain ATCC 49526 / WA1)).